The chain runs to 474 residues: Calcitonin receptor (474 aa).

Positions methionine 1–proline 24 are cleaved as a signal peptide. The Extracellular segment spans residues alanine 25–tyrosine 146. N-linked (GlcNAc...) asparagine glycosylation is found at asparagine 28, asparagine 73, asparagine 125, and asparagine 130. 3 disulfides stabilise this stretch: cysteine 55/cysteine 81, cysteine 72/cysteine 112, and cysteine 95/cysteine 134. Residues valine 147–isoleucine 169 form a helical membrane-spanning segment. Topologically, residues phenylalanine 170–valine 181 are cytoplasmic. Residues threonine 182 to leucine 202 form a helical membrane-spanning segment. The Extracellular segment spans residues valine 203 to cysteine 219. A disulfide bond links cysteine 219 and cysteine 289. The helical transmembrane segment at lysine 220 to isoleucine 242 threads the bilayer. Over tyrosine 243 to leucine 259 the chain is Cytoplasmic. A helical membrane pass occupies residues arginine 260–threonine 280. At arginine 281–histidine 296 the chain is on the extracellular side. Residues leucine 297–valine 320 form a helical membrane-spanning segment. Residues arginine 321 to lysine 340 lie on the Cytoplasmic side of the membrane. Residues alanine 341 to phenylalanine 359 form a helical membrane-spanning segment. The Extracellular portion of the chain corresponds to proline 360–methionine 367. Residues leucine 368 to cysteine 394 form a helical membrane-spanning segment. Topologically, residues asparagine 395 to alanine 474 are cytoplasmic.

It belongs to the G-protein coupled receptor 2 family. As to quaternary structure, heterodimer of CALCR and RAMP1, RAMP2 or RAMP3; the receptor complexes function as AMYR1, AMYR2 and AMYR3 receptors, respectively, and respond to amylin/IAPP, calcitonin/CT and CGRP1 ligands. Interacts with GPRASP2.

It localises to the cell membrane. Its activity is regulated as follows. Sensitive to cholera toxin. In terms of biological role, g protein-coupled receptor activated by ligand peptides amylin (IAPP), calcitonin (CT/CALCA) and calcitonin gene-related peptide type 1 (CGRP1/CALCA). CALCR interacts with receptor-activity-modifying proteins RAMP1, 2 and 3 to form receptor complexes AMYR1, 2 and 3, respectively. IAPP, CT and CGRP1 activate CALCR and AMYRs with distinct modes of receptor activation resulting in specific phenotypes. Ligand binding causes a conformation change that triggers signaling via guanine nucleotide-binding proteins (G proteins) and modulates the activity of downstream effectors. Activates cAMP-dependent pathway. Functionally, non-functional protein. Unable to couple to G proteins and activate adenylyl cyclase. Does not undergo receptor internalization following ligand binding. This is Calcitonin receptor from Homo sapiens (Human).